The primary structure comprises 432 residues: Heme-based aerotactic transducer HemAT (432 aa).

A Methyl-accepting transducer domain is found at Y184–A420.

This sequence belongs to the methyl-accepting chemotaxis (MCP) protein family. In terms of assembly, homotetramer.

Heme-containing signal transducer responsible for aerotaxis, the migratory response toward or away from oxygen. In Bacillus subtilis (strain 168), this protein is Heme-based aerotactic transducer HemAT (hemAT).